The following is a 122-amino-acid chain: UPF0102 protein CLL_A1253 (122 aa).

This sequence belongs to the UPF0102 family.

The sequence is that of UPF0102 protein CLL_A1253 from Clostridium botulinum (strain Eklund 17B / Type B).